Consider the following 299-residue polypeptide: Protease HtpX homolog (299 aa).

2 helical membrane passes run 5–25 (IFLF…VLSV) and 44–64 (MVAL…MSLA). A Zn(2+)-binding site is contributed by His155. The active site involves Glu156. His159 is a Zn(2+) binding site. The next 2 helical transmembrane spans lie at 170–190 (LLQG…AWIA) and 205–225 (FIAV…VVFA). Glu231 serves as a coordination point for Zn(2+).

This sequence belongs to the peptidase M48B family. It depends on Zn(2+) as a cofactor.

Its subcellular location is the cell membrane. The protein is Protease HtpX homolog of Bacillus pumilus (strain SAFR-032).